Reading from the N-terminus, the 283-residue chain is Polyamine aminopropyltransferase (283 aa).

A PABS domain is found at 2–237 (ELWYTEEHTD…GHWLFGFASK (236 aa)). An S-methyl-5'-thioadenosine-binding site is contributed by Gln-31. Spermidine-binding residues include His-62 and Asp-86. Residues Glu-106 and 137–138 (DG) each bind S-methyl-5'-thioadenosine. Asp-155 serves as the catalytic Proton acceptor. 155–158 (DSTD) serves as a coordination point for spermidine. Pro-162 contacts S-methyl-5'-thioadenosine.

It belongs to the spermidine/spermine synthase family. As to quaternary structure, homodimer or homotetramer.

It localises to the cytoplasm. The enzyme catalyses S-adenosyl 3-(methylsulfanyl)propylamine + putrescine = S-methyl-5'-thioadenosine + spermidine + H(+). It participates in amine and polyamine biosynthesis; spermidine biosynthesis; spermidine from putrescine: step 1/1. In terms of biological role, catalyzes the irreversible transfer of a propylamine group from the amino donor S-adenosylmethioninamine (decarboxy-AdoMet) to putrescine (1,4-diaminobutane) to yield spermidine. The sequence is that of Polyamine aminopropyltransferase from Clostridium perfringens (strain SM101 / Type A).